A 180-amino-acid chain; its full sequence is Large ribosomal subunit protein uL6 (180 aa).

This sequence belongs to the universal ribosomal protein uL6 family. As to quaternary structure, part of the 50S ribosomal subunit.

Functionally, this protein binds to the 23S rRNA, and is important in its secondary structure. It is located near the subunit interface in the base of the L7/L12 stalk, and near the tRNA binding site of the peptidyltransferase center. The polypeptide is Large ribosomal subunit protein uL6 (Prosthecochloris aestuarii (strain DSM 271 / SK 413)).